The primary structure comprises 134 residues: ATP synthase epsilon chain, chloroplastic (134 aa).

The protein belongs to the ATPase epsilon chain family. As to quaternary structure, F-type ATPases have 2 components, CF(1) - the catalytic core - and CF(0) - the membrane proton channel. CF(1) has five subunits: alpha(3), beta(3), gamma(1), delta(1), epsilon(1). CF(0) has three main subunits: a, b and c.

It localises to the plastid. Its subcellular location is the chloroplast thylakoid membrane. Its function is as follows. Produces ATP from ADP in the presence of a proton gradient across the membrane. The chain is ATP synthase epsilon chain, chloroplastic from Nymphaea alba (White water-lily).